We begin with the raw amino-acid sequence, 429 residues long: Enolase (429 aa).

Position 162 (Gln162) interacts with (2R)-2-phosphoglycerate. The active-site Proton donor is Glu204. Mg(2+) contacts are provided by Asp241, Glu288, and Asp315. (2R)-2-phosphoglycerate-binding residues include Lys340, Arg369, Ser370, and Lys391. The active-site Proton acceptor is the Lys340.

The protein belongs to the enolase family. The cofactor is Mg(2+).

Its subcellular location is the cytoplasm. The protein resides in the secreted. It is found in the cell surface. It carries out the reaction (2R)-2-phosphoglycerate = phosphoenolpyruvate + H2O. It functions in the pathway carbohydrate degradation; glycolysis; pyruvate from D-glyceraldehyde 3-phosphate: step 4/5. Functionally, catalyzes the reversible conversion of 2-phosphoglycerate (2-PG) into phosphoenolpyruvate (PEP). It is essential for the degradation of carbohydrates via glycolysis. This chain is Enolase, found in Bacteroides fragilis (strain ATCC 25285 / DSM 2151 / CCUG 4856 / JCM 11019 / LMG 10263 / NCTC 9343 / Onslow / VPI 2553 / EN-2).